The sequence spans 761 residues: Elongation factor G, mitochondrial (761 aa).

The N-terminal 42 residues, 1–42, are a transit peptide targeting the mitochondrion; that stretch reads MSVQKMMWVPRKMVGGRIPFFTCSKVFSGFSRRSFHESPLAR. The 282-residue stretch at 68 to 349 folds into the tr-type G domain; sequence NKLRNIGISA…AIVDYLPNPS (282 aa). GTP-binding positions include 77–84, 148–152, and 202–205; these read AHIDSGKT, DTPGH, and NKMD.

This sequence belongs to the TRAFAC class translation factor GTPase superfamily. Classic translation factor GTPase family. EF-G/EF-2 subfamily. The precursor is processed in two steps involving mitochondrial intermediate peptidase (MIP) and mitochondrial processing peptidase (MPP).

It localises to the mitochondrion. Its pathway is protein biosynthesis; polypeptide chain elongation. Its function is as follows. Mitochondrial GTPase that catalyzes the GTP-dependent ribosomal translocation step during translation elongation. During this step, the ribosome changes from the pre-translocational (PRE) to the post-translocational (POST) state as the newly formed A-site-bound peptidyl-tRNA and P-site-bound deacylated tRNA move to the P and E sites, respectively. Catalyzes the coordinated movement of the two tRNA molecules, the mRNA and conformational changes in the ribosome. The chain is Elongation factor G, mitochondrial from Saccharomyces cerevisiae (strain ATCC 204508 / S288c) (Baker's yeast).